Consider the following 693-residue polypeptide: Polyribonucleotide nucleotidyltransferase (693 aa).

Aspartate 489 and aspartate 495 together coordinate Mg(2+). In terms of domain architecture, KH spans proline 556 to isoleucine 615. Residues glycine 625–arginine 693 enclose the S1 motif domain.

Belongs to the polyribonucleotide nucleotidyltransferase family. Component of the RNA degradosome, which is a multiprotein complex involved in RNA processing and mRNA degradation. Mg(2+) is required as a cofactor.

The protein localises to the cytoplasm. The catalysed reaction is RNA(n+1) + phosphate = RNA(n) + a ribonucleoside 5'-diphosphate. Functionally, involved in mRNA degradation. Catalyzes the phosphorolysis of single-stranded polyribonucleotides processively in the 3'- to 5'-direction. The chain is Polyribonucleotide nucleotidyltransferase from Francisella tularensis subsp. tularensis (strain FSC 198).